The following is a 710-amino-acid chain: Polyribonucleotide nucleotidyltransferase (710 aa).

2 residues coordinate Mg(2+): Asp489 and Asp495. Residues 556-615 (PKIDTIKIDVDKIKVVIGKGGETIDKIIAETGVKIDIDDEGNVSIYSSDQAAIDRTKEII) form the KH domain. The region spanning 625-693 (GEVYHAKVIR…EKGRVDASMK (69 aa)) is the S1 motif domain. Residues 691–710 (SMKALIPRPPKPEKKEEKHD) form a disordered region. Basic and acidic residues predominate over residues 700–710 (PKPEKKEEKHD).

Belongs to the polyribonucleotide nucleotidyltransferase family. Mg(2+) is required as a cofactor.

Its subcellular location is the cytoplasm. It catalyses the reaction RNA(n+1) + phosphate = RNA(n) + a ribonucleoside 5'-diphosphate. Involved in mRNA degradation. Catalyzes the phosphorolysis of single-stranded polyribonucleotides processively in the 3'- to 5'-direction. This chain is Polyribonucleotide nucleotidyltransferase, found in Streptococcus pyogenes serotype M4 (strain MGAS10750).